Reading from the N-terminus, the 412-residue chain is Putative phosphate permease PF1020 (412 aa).

The next 10 membrane-spanning stretches (helical) occupy residues 7–27, 50–70, 88–108, 119–139, 143–163, 187–207, 213–233, 298–318, 335–355, and 384–404; these read MLADPILLITILLGFAMAWAI, AVIIAGVLEFMGAYFFGKTVT, VLIFGSIAALIGATIWLVIAT, SIIGGIVGYGIVYGGMSIVNW, IKVVLSWILSPIVGAIFAYLV, FWIGLAFVVIGTMFYIKVLHG, GFLKYGMPAGILTFIVVSLIL, WILALGGLGIAIGVATYGYKV, FTIDFSAATVVLIASWLGMPI, and DIIISWFVTVPAAGVIAGIIF.

It belongs to the inorganic phosphate transporter (PiT) (TC 2.A.20) family.

It is found in the cell membrane. Functionally, potential transporter for phosphate. This is Putative phosphate permease PF1020 from Pyrococcus furiosus (strain ATCC 43587 / DSM 3638 / JCM 8422 / Vc1).